The following is a 433-amino-acid chain: Bifunctional protein GlmU (433 aa).

The segment at 1–226 (MLSVIILAAG…EECFLGVNSQ (226 aa)) is pyrophosphorylase. UDP-N-acetyl-alpha-D-glucosamine-binding positions include 7-10 (LAAG), Lys21, and 80-81 (GT). Asp106 contacts Mg(2+). UDP-N-acetyl-alpha-D-glucosamine contacts are provided by Gly138, Glu152, Asn167, and Asn224. Position 224 (Asn224) interacts with Mg(2+). A linker region spans residues 227–247 (TERAKAEEIMLERLRKNAMDL). The tract at residues 248 to 433 (GVVMQLPNSI…NGYFKFFKKP (186 aa)) is N-acetyltransferase. Residues Arg311 and Lys328 each coordinate UDP-N-acetyl-alpha-D-glucosamine. Catalysis depends on His339, which acts as the Proton acceptor. UDP-N-acetyl-alpha-D-glucosamine is bound by residues Tyr342 and Asn353. Residues Ala356, 362-363 (NY), Ser381, Ser399, and Arg416 each bind acetyl-CoA.

It in the N-terminal section; belongs to the N-acetylglucosamine-1-phosphate uridyltransferase family. In the C-terminal section; belongs to the transferase hexapeptide repeat family. As to quaternary structure, homotrimer. Mg(2+) serves as cofactor.

The protein resides in the cytoplasm. It catalyses the reaction alpha-D-glucosamine 1-phosphate + acetyl-CoA = N-acetyl-alpha-D-glucosamine 1-phosphate + CoA + H(+). It carries out the reaction N-acetyl-alpha-D-glucosamine 1-phosphate + UTP + H(+) = UDP-N-acetyl-alpha-D-glucosamine + diphosphate. It functions in the pathway nucleotide-sugar biosynthesis; UDP-N-acetyl-alpha-D-glucosamine biosynthesis; N-acetyl-alpha-D-glucosamine 1-phosphate from alpha-D-glucosamine 6-phosphate (route II): step 2/2. Its pathway is nucleotide-sugar biosynthesis; UDP-N-acetyl-alpha-D-glucosamine biosynthesis; UDP-N-acetyl-alpha-D-glucosamine from N-acetyl-alpha-D-glucosamine 1-phosphate: step 1/1. The protein operates within bacterial outer membrane biogenesis; LPS lipid A biosynthesis. Catalyzes the last two sequential reactions in the de novo biosynthetic pathway for UDP-N-acetylglucosamine (UDP-GlcNAc). The C-terminal domain catalyzes the transfer of acetyl group from acetyl coenzyme A to glucosamine-1-phosphate (GlcN-1-P) to produce N-acetylglucosamine-1-phosphate (GlcNAc-1-P), which is converted into UDP-GlcNAc by the transfer of uridine 5-monophosphate (from uridine 5-triphosphate), a reaction catalyzed by the N-terminal domain. This Helicobacter pylori (strain ATCC 700392 / 26695) (Campylobacter pylori) protein is Bifunctional protein GlmU.